Reading from the N-terminus, the 154-residue chain is Anti-sigma-E factor RseA (154 aa).

The residue at position 39 (T39) is a Phosphothreonine; by PknB. Zn(2+)-binding residues include H66, C70, and C73. A disordered region spans residues S104–R154. The segment covering Q124 to D136 has biased composition (low complexity).

This sequence belongs to the zinc-associated anti-sigma factor (ZAS) superfamily. Interacts with cognate ECF RNA polymerase sigma factor SigE under reducing conditions; this inhibits the interaction of SigE with the RNA polymerase catalytic core. It depends on Zn(2+) as a cofactor. Post-translationally, phosphorylated by PknB on Thr-39; can be dephosphorylated (at least in vitro) by PstP. Phosphorylation is the signal for subsequent degradation by the ClpC1-ClpP2 complex. In terms of processing, degraded following vancomycin treatment (surface stress) by a ClpC1-ClpP2 complex.

It is found in the cytoplasm. Its function is as follows. An anti-sigma factor for extracytoplasmic function (ECF) sigma factor SigE. ECF sigma factors are held in an inactive form by an anti-sigma factor. This chain is Anti-sigma-E factor RseA (rseA), found in Mycobacterium tuberculosis (strain ATCC 25618 / H37Rv).